Consider the following 610-residue polypeptide: Dihydroxy-acid dehydratase (610 aa).

Asp-81 serves as a coordination point for Mg(2+). [2Fe-2S] cluster is bound at residue Cys-122. Residues Asp-123 and Lys-124 each coordinate Mg(2+). Lys-124 is modified (N6-carboxylysine). A [2Fe-2S] cluster-binding site is contributed by Cys-193. Glu-489 is a binding site for Mg(2+). The active-site Proton acceptor is Ser-515.

It belongs to the IlvD/Edd family. As to quaternary structure, homodimer. The cofactor is [2Fe-2S] cluster. Mg(2+) serves as cofactor.

The catalysed reaction is (2R)-2,3-dihydroxy-3-methylbutanoate = 3-methyl-2-oxobutanoate + H2O. It carries out the reaction (2R,3R)-2,3-dihydroxy-3-methylpentanoate = (S)-3-methyl-2-oxopentanoate + H2O. It participates in amino-acid biosynthesis; L-isoleucine biosynthesis; L-isoleucine from 2-oxobutanoate: step 3/4. Its pathway is amino-acid biosynthesis; L-valine biosynthesis; L-valine from pyruvate: step 3/4. Functions in the biosynthesis of branched-chain amino acids. Catalyzes the dehydration of (2R,3R)-2,3-dihydroxy-3-methylpentanoate (2,3-dihydroxy-3-methylvalerate) into 2-oxo-3-methylpentanoate (2-oxo-3-methylvalerate) and of (2R)-2,3-dihydroxy-3-methylbutanoate (2,3-dihydroxyisovalerate) into 2-oxo-3-methylbutanoate (2-oxoisovalerate), the penultimate precursor to L-isoleucine and L-valine, respectively. The polypeptide is Dihydroxy-acid dehydratase (Xylella fastidiosa (strain M12)).